The sequence spans 711 residues: Polyribonucleotide nucleotidyltransferase (711 aa).

Mg(2+) is bound by residues Asp-486 and Asp-492. One can recognise a KH domain in the interval 553–612 (PRIHTIKINPDKIKDVIGKGGSVIRALTEETGTTIEIEDDGTVKIAATDGEKAKHAIRRI). Positions 622–690 (GRVYTGKVTR…RQGRIRLSIK (69 aa)) constitute an S1 motif domain. The disordered stretch occupies residues 689–711 (IKEATEQSQPAAAPEAPAAEQGE). The span at 694–711 (EQSQPAAAPEAPAAEQGE) shows a compositional bias: low complexity.

The protein belongs to the polyribonucleotide nucleotidyltransferase family. As to quaternary structure, component of the RNA degradosome, which is a multiprotein complex involved in RNA processing and mRNA degradation. Requires Mg(2+) as cofactor.

The protein localises to the cytoplasm. It carries out the reaction RNA(n+1) + phosphate = RNA(n) + a ribonucleoside 5'-diphosphate. Its function is as follows. Involved in mRNA degradation. Catalyzes the phosphorolysis of single-stranded polyribonucleotides processively in the 3'- to 5'-direction. The polypeptide is Polyribonucleotide nucleotidyltransferase (Escherichia coli O8 (strain IAI1)).